We begin with the raw amino-acid sequence, 1490 residues long: DNA-directed RNA polymerase subunit beta' (1490 aa).

Residues Cys67, Cys69, Cys82, and Cys85 each contribute to the Zn(2+) site. The Mg(2+) site is built by Asp499, Asp501, and Asp503. The Zn(2+) site is built by Cys868, Cys944, Cys951, and Cys954.

Belongs to the RNA polymerase beta' chain family. The RNAP catalytic core consists of 2 alpha, 1 beta, 1 beta' and 1 omega subunit. When a sigma factor is associated with the core the holoenzyme is formed, which can initiate transcription. Mg(2+) is required as a cofactor. The cofactor is Zn(2+).

The enzyme catalyses RNA(n) + a ribonucleoside 5'-triphosphate = RNA(n+1) + diphosphate. Functionally, DNA-dependent RNA polymerase catalyzes the transcription of DNA into RNA using the four ribonucleoside triphosphates as substrates. This chain is DNA-directed RNA polymerase subunit beta', found in Chlorobaculum tepidum (strain ATCC 49652 / DSM 12025 / NBRC 103806 / TLS) (Chlorobium tepidum).